Reading from the N-terminus, the 855-residue chain is Coiled-coil domain-containing protein 87 (855 aa).

Disordered regions lie at residues 23–43 and 278–302; these read LFPSKAKPPPEPPKRPSQDAT and SRPSPMVPLPSHSPSSESHQFPTSP. Over residues 287-296 the composition is skewed to low complexity; sequence PSHSPSSESH. Coiled-coil stretches lie at residues 387–413 and 764–789; these read TRRLTAQHHLEKLQQMIKSLQEEEASG and RSYLQRKLNRMESNLVSLLERIESVF.

This sequence belongs to the CCDC87 family. Specifically expressed in testis (at protein level). Not detected in other tissues tested (at protein level). In the testis, localizes to pachytene spermatocytes and spermatids.

Its function is as follows. Plays a role in spermatogenesis, where it is important for normal sperm head morphology. Also required for the acrosome reaction and thus normal male fertility. The polypeptide is Coiled-coil domain-containing protein 87 (Ccdc87) (Mus musculus (Mouse)).